Here is a 201-residue protein sequence, read N- to C-terminus: Proteasome subunit beta 1 (201 aa).

The propeptide at 1-10 (MNGSPSAMKG) is removed in mature form; by autocatalysis. The active-site Nucleophile is the threonine 11.

The protein belongs to the peptidase T1B family. In terms of assembly, the 20S proteasome core is composed of 14 alpha and 14 beta subunits that assemble into four stacked heptameric rings, resulting in a barrel-shaped structure. The two inner rings, each composed of seven catalytic beta subunits, are sandwiched by two outer rings, each composed of seven alpha subunits. The catalytic chamber with the active sites is on the inside of the barrel. Has a gated structure, the ends of the cylinder being occluded by the N-termini of the alpha-subunits. Is capped at one or both ends by the proteasome regulatory ATPase, PAN.

Its subcellular location is the cytoplasm. The catalysed reaction is Cleavage of peptide bonds with very broad specificity.. With respect to regulation, the formation of the proteasomal ATPase PAN-20S proteasome complex, via the docking of the C-termini of PAN into the intersubunit pockets in the alpha-rings, triggers opening of the gate for substrate entry. Interconversion between the open-gate and close-gate conformations leads to a dynamic regulation of the 20S proteasome proteolysis activity. Its function is as follows. Component of the proteasome core, a large protease complex with broad specificity involved in protein degradation. This chain is Proteasome subunit beta 1, found in Thermococcus gammatolerans (strain DSM 15229 / JCM 11827 / EJ3).